A 431-amino-acid polypeptide reads, in one-letter code: Lipoyl synthase 2, mitochondrial (431 aa).

Positions 21-43 are disordered; the sequence is SPLGKLQEERGEGVAKDPKKDKQ. Positions 26–40 are enriched in basic and acidic residues; sequence LQEERGEGVAKDPKK. The [4Fe-4S] cluster site is built by C127, C132, C138, C159, C163, C166, and S375. One can recognise a Radical SAM core domain in the interval 142-364; sequence DEEEGTATAT…EEEAMAMGFL (223 aa).

The protein belongs to the radical SAM superfamily. Lipoyl synthase family. [4Fe-4S] cluster is required as a cofactor.

It is found in the mitochondrion. The enzyme catalyses [[Fe-S] cluster scaffold protein carrying a second [4Fe-4S](2+) cluster] + N(6)-octanoyl-L-lysyl-[protein] + 2 oxidized [2Fe-2S]-[ferredoxin] + 2 S-adenosyl-L-methionine + 4 H(+) = [[Fe-S] cluster scaffold protein] + N(6)-[(R)-dihydrolipoyl]-L-lysyl-[protein] + 4 Fe(3+) + 2 hydrogen sulfide + 2 5'-deoxyadenosine + 2 L-methionine + 2 reduced [2Fe-2S]-[ferredoxin]. It participates in protein modification; protein lipoylation via endogenous pathway; protein N(6)-(lipoyl)lysine from octanoyl-[acyl-carrier-protein]: step 2/2. Functionally, catalyzes the radical-mediated insertion of two sulfur atoms into the C-6 and C-8 positions of the octanoyl moiety bound to the lipoyl domains of lipoate-dependent enzymes, thereby converting the octanoylated domains into lipoylated derivatives. The polypeptide is Lipoyl synthase 2, mitochondrial (Trypanosoma cruzi (strain CL Brener)).